The sequence spans 85 residues: U4-theraphotoxin-Hhn1r (85 aa).

A signal peptide spans Met1 to Ala22. Residues Glu23–Arg48 constitute a propeptide that is removed on maturation. Cystine bridges form between Cys52–Cys66, Cys56–Cys77, and Cys71–Cys82.

The protein belongs to the neurotoxin 12 (Hwtx-2) family. 02 (Hwtx-2) subfamily. In terms of tissue distribution, expressed by the venom gland.

It localises to the secreted. Postsynaptic neurotoxin. The protein is U4-theraphotoxin-Hhn1r of Cyriopagopus hainanus (Chinese bird spider).